The sequence spans 847 residues: Ras GTPase-activating protein 2 (847 aa).

The span at 1 to 18 (MAAAAPAAAALTEAPAVP) shows a compositional bias: low complexity. The segment at 1–31 (MAAAAPAAAALTEAPAVPGTAEPETGDEDSR) is disordered. Alanine 2 is modified (N-acetylalanine). 2 C2 domains span residues 19–137 (GTAE…ETWF) and 148–288 (VQGK…QAWY). Positions 371–588 (NKLVPFITAV…TDVKKFLDEI (218 aa)) constitute a Ras-GAP domain. Serine 554 carries the post-translational modification Phosphoserine. One can recognise a PH domain in the interval 603 to 704 (VHLKEGEMYK…WIDMLCRVSR (102 aa)). Residues 706 to 742 (NHNRLSSFHPSAYLNGNWLCCQETSEGTPGCKPCTAG) form a Btk-type zinc finger. Zn(2+)-binding residues include histidine 714, cysteine 725, cysteine 726, and cysteine 736. Residues 819 to 847 (DEPHEKYRKKRSSSAKYGSKENPIVGKIS) are disordered.

Widely expressed. Higher expression in brain, placenta, and kidney.

Its subcellular location is the cell membrane. Inhibitory regulator of the Ras-cyclic AMP pathway. May bind inositol tetrakisphosphate (IP4) and phospholipids. The chain is Ras GTPase-activating protein 2 (Rasa2) from Rattus norvegicus (Rat).